We begin with the raw amino-acid sequence, 152 residues long: MKLIASNKKAYFDYEILETLEAGLALLGSEVKALRQTRVNLKDNFVKIIKGEAFLFGVHISYLDTIHAYYKPNERRERKLLLHKKQLLKWQIEASKERLSIVGLKLYFNQRNKAKIQIALVKGKKLHDKRQSLKEKALNKEILADLKHHFKG.

It belongs to the SmpB family.

Its subcellular location is the cytoplasm. Functionally, required for rescue of stalled ribosomes mediated by trans-translation. Binds to transfer-messenger RNA (tmRNA), required for stable association of tmRNA with ribosomes. tmRNA and SmpB together mimic tRNA shape, replacing the anticodon stem-loop with SmpB. tmRNA is encoded by the ssrA gene; the 2 termini fold to resemble tRNA(Ala) and it encodes a 'tag peptide', a short internal open reading frame. During trans-translation Ala-aminoacylated tmRNA acts like a tRNA, entering the A-site of stalled ribosomes, displacing the stalled mRNA. The ribosome then switches to translate the ORF on the tmRNA; the nascent peptide is terminated with the 'tag peptide' encoded by the tmRNA and targeted for degradation. The ribosome is freed to recommence translation, which seems to be the essential function of trans-translation. This is SsrA-binding protein from Helicobacter pylori (strain Shi470).